A 980-amino-acid polypeptide reads, in one-letter code: Peroxisomal ATPase PEX6 (980 aa).

Omega-N-methylarginine is present on Arg119. ATP-binding positions include Gly470–Thr477 and Gly744–Thr751.

This sequence belongs to the AAA ATPase family. As to quaternary structure, interacts with PEX1; forming the PEX1-PEX6 AAA ATPase complex, which is composed of a heterohexamer formed by a trimer of PEX1-PEX6 dimers. Interacts with PEX26; interaction is direct and promotes recruitment to peroxisomal membranes. Interacts with ZFAND6. In terms of tissue distribution, expressed in the retina, at higher levels in the photoreceptor layer at the joint between the outer and inner segments.

The protein localises to the cytoplasm. The protein resides in the cytosol. It is found in the peroxisome membrane. Its subcellular location is the cell projection. It localises to the cilium. The protein localises to the photoreceptor outer segment. The enzyme catalyses ATP + H2O = ADP + phosphate + H(+). Its function is as follows. Component of the PEX1-PEX6 AAA ATPase complex, a protein dislocase complex that mediates the ATP-dependent extraction of the PEX5 receptor from peroxisomal membranes, an essential step for PEX5 recycling. Specifically recognizes PEX5 monoubiquitinated at 'Cys-11', and pulls it out of the peroxisome lumen through the PEX2-PEX10-PEX12 retrotranslocation channel. Extraction by the PEX1-PEX6 AAA ATPase complex is accompanied by unfolding of the TPR repeats and release of bound cargo from PEX5. The protein is Peroxisomal ATPase PEX6 of Homo sapiens (Human).